The chain runs to 147 residues: Pathogenesis-related protein PR-4B (147 aa).

Residues 1–25 (MERVNNYKLCVALLIMSVMMAMAAA) form the signal peptide. In terms of domain architecture, Barwin spans 26-147 (QSATNVRSTY…VNYEFVNCND (122 aa)). 3 disulfides stabilise this stretch: Cys-54/Cys-86, Cys-75/Cys-109, and Cys-89/Cys-145.

It is found in the secreted. It localises to the cell wall. This Nicotiana tabacum (Common tobacco) protein is Pathogenesis-related protein PR-4B.